The sequence spans 374 residues: uncharacterized protein (374 aa).

29 to 36 (GSLNSGKS) contacts ATP.

Belongs to the archaeal ATPase family.

This is an uncharacterized protein from Methanocaldococcus jannaschii (strain ATCC 43067 / DSM 2661 / JAL-1 / JCM 10045 / NBRC 100440) (Methanococcus jannaschii).